A 436-amino-acid chain; its full sequence is Trigger factor (436 aa).

The PPIase FKBP-type domain occupies 161–246 (GDQVIVDFDG…VREVKEPTLP (86 aa)).

The protein belongs to the FKBP-type PPIase family. Tig subfamily.

The protein localises to the cytoplasm. It carries out the reaction [protein]-peptidylproline (omega=180) = [protein]-peptidylproline (omega=0). In terms of biological role, involved in protein export. Acts as a chaperone by maintaining the newly synthesized protein in an open conformation. Functions as a peptidyl-prolyl cis-trans isomerase. The chain is Trigger factor from Thioalkalivibrio sulfidiphilus (strain HL-EbGR7).